The primary structure comprises 129 residues: NADH-quinone oxidoreductase subunit A (129 aa).

The next 3 membrane-spanning stretches (helical) occupy residues 6–26 (FWPFILYAGMVLVLVALIVGF), 63–83 (LVAVLFVIFDMEAAFIFAWAV), and 89–109 (GWIGYGGALAFITILGVALIY).

The protein belongs to the complex I subunit 3 family. In terms of assembly, NDH-1 is composed of 14 different subunits. Subunits NuoA, H, J, K, L, M, N constitute the membrane sector of the complex.

It localises to the cell inner membrane. The enzyme catalyses a quinone + NADH + 5 H(+)(in) = a quinol + NAD(+) + 4 H(+)(out). In terms of biological role, NDH-1 shuttles electrons from NADH, via FMN and iron-sulfur (Fe-S) centers, to quinones in the respiratory chain. The immediate electron acceptor for the enzyme in this species is believed to be ubiquinone. Couples the redox reaction to proton translocation (for every two electrons transferred, four hydrogen ions are translocated across the cytoplasmic membrane), and thus conserves the redox energy in a proton gradient. The chain is NADH-quinone oxidoreductase subunit A from Nitrosococcus oceani (strain ATCC 19707 / BCRC 17464 / JCM 30415 / NCIMB 11848 / C-107).